Here is a 35-residue protein sequence, read N- to C-terminus: Photosystem II reaction center protein M (35 aa).

M1 is modified (N-formylmethionine). The chain crosses the membrane as a helical span at residues 7-28 (GFIASILFVLVPTVFLLILFIQ).

The protein belongs to the PsbM family. As to quaternary structure, PSII is composed of 1 copy each of membrane proteins PsbA, PsbB, PsbC, PsbD, PsbE, PsbF, PsbH, PsbI, PsbJ, PsbK, PsbL, PsbM, PsbT, PsbX, PsbY, PsbZ, Psb30/Ycf12, peripheral proteins PsbO, CyanoQ (PsbQ), PsbU, PsbV and a large number of cofactors. It forms dimeric complexes.

Its subcellular location is the cellular thylakoid membrane. Its function is as follows. One of the components of the core complex of photosystem II (PSII). PSII is a light-driven water:plastoquinone oxidoreductase that uses light energy to abstract electrons from H(2)O, generating O(2) and a proton gradient subsequently used for ATP formation. It consists of a core antenna complex that captures photons, and an electron transfer chain that converts photonic excitation into a charge separation. This subunit is found at the monomer-monomer interface. Involved in assembly of monomeric PSII from the CP43-less intermediate. The protein is Photosystem II reaction center protein M of Synechocystis sp. (strain ATCC 27184 / PCC 6803 / Kazusa).